Here is an 89-residue protein sequence, read N- to C-terminus: Small ribosomal subunit protein uS15 (89 aa).

This sequence belongs to the universal ribosomal protein uS15 family. As to quaternary structure, part of the 30S ribosomal subunit. Forms a bridge to the 50S subunit in the 70S ribosome, contacting the 23S rRNA.

In terms of biological role, one of the primary rRNA binding proteins, it binds directly to 16S rRNA where it helps nucleate assembly of the platform of the 30S subunit by binding and bridging several RNA helices of the 16S rRNA. Its function is as follows. Forms an intersubunit bridge (bridge B4) with the 23S rRNA of the 50S subunit in the ribosome. The protein is Small ribosomal subunit protein uS15 of Frankia casuarinae (strain DSM 45818 / CECT 9043 / HFP020203 / CcI3).